The primary structure comprises 879 residues: Alanine--tRNA ligase (879 aa).

Residues His-570, His-574, Cys-672, and His-676 each contribute to the Zn(2+) site.

Belongs to the class-II aminoacyl-tRNA synthetase family. Requires Zn(2+) as cofactor.

The protein localises to the cytoplasm. The catalysed reaction is tRNA(Ala) + L-alanine + ATP = L-alanyl-tRNA(Ala) + AMP + diphosphate. Its function is as follows. Catalyzes the attachment of alanine to tRNA(Ala) in a two-step reaction: alanine is first activated by ATP to form Ala-AMP and then transferred to the acceptor end of tRNA(Ala). Also edits incorrectly charged Ser-tRNA(Ala) and Gly-tRNA(Ala) via its editing domain. The sequence is that of Alanine--tRNA ligase from Nitratidesulfovibrio vulgaris (strain ATCC 29579 / DSM 644 / CCUG 34227 / NCIMB 8303 / VKM B-1760 / Hildenborough) (Desulfovibrio vulgaris).